The sequence spans 970 residues: uncharacterized protein (970 aa).

The helical transmembrane segment at 12 to 32 (VIFFSVFFVIFFLFIESSVGF) threads the bilayer.

The protein to E.coli YtfN.

Its subcellular location is the membrane. This is an uncharacterized protein from Buchnera aphidicola subsp. Acyrthosiphon pisum (strain APS) (Acyrthosiphon pisum symbiotic bacterium).